Consider the following 505-residue polypeptide: Phosphoglycerate kinase A (505 aa).

Residues valine 32, aspartate 33, phenylalanine 34, asparagine 35, arginine 48, serine 70, histidine 71, glycine 73, arginine 74, arginine 224, histidine 260, and arginine 261 each coordinate (2R)-3-phosphoglycerate. The ADP site is built by glycine 306 and alanine 307. Residue glycine 306 participates in CDP binding. Alanine 307 and lysine 308 together coordinate AMP. Residue alanine 307 coordinates ATP. Alanine 307 provides a ligand contact to Mg(2+). Lysine 308 is a (2R)-3-phosphoglycerate binding site. Glutamate 311 contacts CDP. Mg(2+) is bound at residue glutamate 311. Lysine 312 and glycine 330 together coordinate ADP. Lysine 312 contacts AMP. Lysine 312 is a binding site for ATP. CDP is bound at residue glycine 330. Alanine 331 and alanine 403 together coordinate AMP. 2 residues coordinate ATP: alanine 331 and alanine 403. Positions 403 and 427 each coordinate ADP. 2 residues coordinate CDP: glycine 428 and phenylalanine 433. The ADP site is built by phenylalanine 433, glutamate 434, glutamate 466, and serine 467. Glutamate 434 contributes to the AMP binding site. The ATP site is built by glutamate 434, glutamate 466, and serine 467. Residue glutamate 466 participates in Mg(2+) binding.

This sequence belongs to the phosphoglycerate kinase family. In terms of assembly, monomer. Mg(2+) serves as cofactor.

The catalysed reaction is (2R)-3-phosphoglycerate + ATP = (2R)-3-phospho-glyceroyl phosphate + ADP. The protein operates within carbohydrate degradation; glycolysis; pyruvate from D-glyceraldehyde 3-phosphate: step 2/5. The polypeptide is Phosphoglycerate kinase A (Trypanosoma brucei brucei).